The following is a 304-amino-acid chain: Oxygen-dependent coproporphyrinogen-III oxidase (304 aa).

S93 contributes to the substrate binding site. A divalent metal cation is bound by residues H97 and H107. The Proton donor role is filled by H107. 109 to 111 (NVR) serves as a coordination point for substrate. Residues H146 and H176 each contribute to the a divalent metal cation site. An important for dimerization region spans residues 241 to 276 (YVEFNLVYDRGTLFGLQSGGRTESILMSLPPQVRWG). 259-261 (GGR) is a binding site for substrate.

Belongs to the aerobic coproporphyrinogen-III oxidase family. Homodimer. A divalent metal cation serves as cofactor.

Its subcellular location is the cytoplasm. It catalyses the reaction coproporphyrinogen III + O2 + 2 H(+) = protoporphyrinogen IX + 2 CO2 + 2 H2O. It functions in the pathway porphyrin-containing compound metabolism; protoporphyrin-IX biosynthesis; protoporphyrinogen-IX from coproporphyrinogen-III (O2 route): step 1/1. Its function is as follows. Involved in the heme biosynthesis. Catalyzes the aerobic oxidative decarboxylation of propionate groups of rings A and B of coproporphyrinogen-III to yield the vinyl groups in protoporphyrinogen-IX. The chain is Oxygen-dependent coproporphyrinogen-III oxidase from Pseudomonas syringae pv. tomato (strain ATCC BAA-871 / DC3000).